The following is a 310-amino-acid chain: Ribosomal RNA small subunit methyltransferase H (310 aa).

Residues 32–34 (GGH), D52, F79, D100, and Q107 contribute to the S-adenosyl-L-methionine site.

Belongs to the methyltransferase superfamily. RsmH family.

Its subcellular location is the cytoplasm. The enzyme catalyses cytidine(1402) in 16S rRNA + S-adenosyl-L-methionine = N(4)-methylcytidine(1402) in 16S rRNA + S-adenosyl-L-homocysteine + H(+). Specifically methylates the N4 position of cytidine in position 1402 (C1402) of 16S rRNA. In Bacillus cereus (strain ATCC 10987 / NRS 248), this protein is Ribosomal RNA small subunit methyltransferase H.